The chain runs to 555 residues: Hydroxylamine reductase (555 aa).

[4Fe-4S] cluster contacts are provided by cysteine 3, cysteine 6, cysteine 18, and cysteine 25. 8 residues coordinate hybrid [4Fe-2O-2S] cluster: histidine 252, glutamate 276, cysteine 320, cysteine 407, cysteine 435, cysteine 460, glutamate 494, and lysine 496. Cysteine 407 is modified (cysteine persulfide).

Belongs to the HCP family. [4Fe-4S] cluster serves as cofactor. Requires hybrid [4Fe-2O-2S] cluster as cofactor.

Its subcellular location is the cytoplasm. It catalyses the reaction A + NH4(+) + H2O = hydroxylamine + AH2 + H(+). In terms of biological role, catalyzes the reduction of hydroxylamine to form NH(3) and H(2)O. The protein is Hydroxylamine reductase of Burkholderia lata (strain ATCC 17760 / DSM 23089 / LMG 22485 / NCIMB 9086 / R18194 / 383).